Here is a 295-residue protein sequence, read N- to C-terminus: Cyclic dipyrimidine nucleotide synthase CdnE (295 aa).

The disordered stretch occupies residues 1–28; that stretch reads MAKYTEDQLTSWTKPPSDSEQTKLENSE. Positions 7–19 are enriched in polar residues; that stretch reads DQLTSWTKPPSDS. Residues Gln-51 and Ser-53 each coordinate UTP. Asp-67 is a binding site for Mg(2+). The UTP site is built by Lys-123, Asn-169, Arg-197, Phe-217, and Lys-276. Residues 275–277 carry the Pyrimidine specificity motif (R/Q)xW in donor pocket motif; that stretch reads RKW.

It belongs to the CD-NTase family. E02 subfamily. In terms of assembly, monomer. Requires Mg(2+) as cofactor.

The catalysed reaction is 2 UTP = c-di-UMP + 2 diphosphate. It catalyses the reaction UTP + CTP = cyclic CMP-UMP + 2 diphosphate. Its function is as follows. Cyclic nucleotide synthase (second messenger synthase) of a CBASS antivirus system. CBASS (cyclic oligonucleotide-based antiphage signaling system) provides immunity against bacteriophage. The CD-NTase protein synthesizes cyclic nucleotides in response to infection; these serve as specific second messenger signals. The signals activate a diverse range of effectors, leading to bacterial cell death and thus abortive phage infection. A type I-B(UU) CBASS system. This chain is Cyclic dipyrimidine nucleotide synthase CdnE, found in Cecembia lonarensis (strain CCUG 58316 / KCTC 22772 / LW9).